We begin with the raw amino-acid sequence, 465 residues long: DEAD-box ATP-dependent RNA helicase 55 (465 aa).

Residues 17–45 (FSELKPPLSEDIIEALDRSGFEVCTPVQA) carry the Q motif motif. One can recognise a Helicase ATP-binding domain in the interval 48–219 (IPFLCSHKDV…KAGLRNPYLK (172 aa)). 61–68 (AATGSGKT) lines the ATP pocket. The short motif at 167-170 (DEAD) is the DEAD box element. In terms of domain architecture, Helicase C-terminal spans 228–422 (QLVHLLIENK…KDKLQQEKRG (195 aa)). The interval 413–465 (KDKLQQEKRGKRKKSSKEAVDDSNKASRKRKLTGRQRQTIQTAQDEEEMNLRL) is disordered. Residues 428 to 437 (SKEAVDDSNK) show a composition bias toward basic and acidic residues. A compositionally biased stretch (acidic residues) spans 456–465 (QDEEEMNLRL).

The protein belongs to the DEAD box helicase family. DDX55/SPB4 subfamily.

The enzyme catalyses ATP + H2O = ADP + phosphate + H(+). This is DEAD-box ATP-dependent RNA helicase 55 (RH55) from Arabidopsis thaliana (Mouse-ear cress).